Here is a 93-residue protein sequence, read N- to C-terminus: Large ribosomal subunit protein eL42 (93 aa).

Cysteine 11 and cysteine 14 together coordinate Zn(2+). Residues 11-75 (CPNCDEHHQL…TDLKYRCSEC (65 aa)) form a C4-type zinc finger. Residues 24–62 (KVRSGRSSGMKWDARRTKRANASIGNHGRFSKVPVGNKP) are disordered. Zn(2+)-binding residues include cysteine 72 and cysteine 75.

The protein belongs to the eukaryotic ribosomal protein eL42 family. As to quaternary structure, part of the 50S ribosomal subunit. Requires Zn(2+) as cofactor.

In terms of biological role, binds to the 23S rRNA. This Halobacterium salinarum (strain ATCC 700922 / JCM 11081 / NRC-1) (Halobacterium halobium) protein is Large ribosomal subunit protein eL42.